The sequence spans 104 residues: Large ribosomal subunit protein uL24 (104 aa).

Belongs to the universal ribosomal protein uL24 family. In terms of assembly, part of the 50S ribosomal subunit.

Functionally, one of two assembly initiator proteins, it binds directly to the 5'-end of the 23S rRNA, where it nucleates assembly of the 50S subunit. In terms of biological role, one of the proteins that surrounds the polypeptide exit tunnel on the outside of the subunit. The polypeptide is Large ribosomal subunit protein uL24 (Citrobacter koseri (strain ATCC BAA-895 / CDC 4225-83 / SGSC4696)).